We begin with the raw amino-acid sequence, 582 residues long: GPI-anchor transamidase component PIGT (582 aa).

An N-terminal signal peptide occupies residues 1 to 25; the sequence is MAAAMPLGLPLRLLVLLLVGRGCCG. Topologically, residues 26–529 are lumenal; it reads CAEGPRDSLR…NLPTPDFSMP (504 aa). N-linked (GlcNAc...) asparagine glycosylation is present at Asn168. Intrachain disulfides connect Cys199–Cys276 and Cys230–Cys235. N-linked (GlcNAc...) asparagine glycosylation is found at Asn295 and Asn331. Positions 465, 525, 527, and 531 each coordinate a 2-acyl-6-[6-phosphoethanolamine-alpha-D-mannosyl-(1-&gt;2)-6-phosphoethanolamine-alpha-D-mannosyl-(1-&gt;6)-2-phosphoethanolamine-alpha-D-mannosyl-(1-&gt;4)-alpha-D-glucosaminyl]-1-(1-radyl,2-acyl-sn-glycero-3-phospho)-1D-myo-inositol. Residues 530–552 traverse the membrane as a helical segment; that stretch reads YNVICLTCTVVAVCYGSFYNLLT. Topologically, residues 553-582 are cytoplasmic; the sequence is RTFHIEEPKSGGLAKRLANLIRRARGVPPL.

This sequence belongs to the PIGT family. Heteropentamer. Part of the GPI-anchor transamidase complex, consisting of PIGK, PIGT, PIGS, PIGU and GAA1. In terms of processing, the disulfide bond between PIGK/GPI8 and PIGT is important for normal enzyme activity.

It localises to the endoplasmic reticulum membrane. It participates in glycolipid biosynthesis; glycosylphosphatidylinositol-anchor biosynthesis. Its function is as follows. Component of the glycosylphosphatidylinositol-anchor (GPI-anchor) transamidase (GPI-T) complex that catalyzes the formation of the linkage between a proprotein and a GPI-anchor and participates in GPI anchored protein biosynthesis. May play a crucial role in GPI-T complex assembly in the luminal layer. Binds GPI-anchor. In Mus musculus (Mouse), this protein is GPI-anchor transamidase component PIGT.